Here is a 1421-residue protein sequence, read N- to C-terminus: Cytoadherence-linked asexual protein 3.2 (1421 aa).

Residues 1–24 form the signal peptide; the sequence is MVSFFKTPIIIFFFLLCLNEKVLC. 4 disulfide bridges follow: C335/C363, C409/C415, C519/C547, and C523/C544. Residues 1203–1223 form a helical membrane-spanning segment; the sequence is NFFMELANGFMYAFCFFAISQ. C1352 and C1355 are disulfide-bonded. The segment at 1371-1413 is disordered; sequence GDKNTNETTEIKKQTSTYIDTEKMNEADSADSDDEKDFDTPDN. A compositionally biased stretch (acidic residues) spans 1398–1412; the sequence is DSADSDDEKDFDTPD.

Component of the RhopH complex. RhopH complex is at least composed of CLAG3.1/CLAG3.2, RhopH2 and RhopH3 with a 1:1:1 subunit stoichiometry. CLAG3.1/CLAG3.2 mediates subunit association through independent contacts with RhopH2 and RhopH3, which do not directly interact with one another. Interacts with RhopH2. Interacts with RhopH3.

It localises to the host cell membrane. Its subcellular location is the parasitophorous vacuole membrane. The protein localises to the host cytoplasm. It is found in the cytoplasmic vesicle. The protein resides in the secretory vesicle. It localises to the rhoptry. Functionally, participates in the formation of new permeability pathways in Plasmodium-infected erythrocytes enabling the uptake of nutrients from the blood plasma. This is Cytoadherence-linked asexual protein 3.2 from Plasmodium falciparum.